The sequence spans 356 residues: V-type proton ATPase subunit d (356 aa).

It belongs to the V-ATPase V0D/AC39 subunit family. In terms of assembly, V-ATPase is a heteromultimeric enzyme composed of a peripheral catalytic V1 complex (components A to H) attached to an integral membrane V0 proton pore complex (components: a, c, c', c'' and d).

In terms of biological role, subunit of the integral membrane V0 complex of vacuolar ATPase. Vacuolar ATPase is responsible for acidifying a variety of intracellular compartments in eukaryotic cells, thus providing most of the energy required for transport processes in the vacuolar system. This is V-type proton ATPase subunit d (vatD-1) from Dictyostelium discoideum (Social amoeba).